The chain runs to 233 residues: tRNA (guanine-N(7)-)-methyltransferase (233 aa).

Positions 62, 87, 114, and 136 each coordinate S-adenosyl-L-methionine. Asp136 is a catalytic residue. Substrate is bound by residues Lys140, Asp172, and 211–214 (TRYE).

This sequence belongs to the class I-like SAM-binding methyltransferase superfamily. TrmB family.

It carries out the reaction guanosine(46) in tRNA + S-adenosyl-L-methionine = N(7)-methylguanosine(46) in tRNA + S-adenosyl-L-homocysteine. Its pathway is tRNA modification; N(7)-methylguanine-tRNA biosynthesis. In terms of biological role, catalyzes the formation of N(7)-methylguanine at position 46 (m7G46) in tRNA. This Erythrobacter litoralis (strain HTCC2594) protein is tRNA (guanine-N(7)-)-methyltransferase.